The following is a 222-amino-acid chain: Capsular polysaccharide type 5 biosynthesis protein cap5A (222 aa).

The next 2 helical transmembrane spans lie at 20 to 40 (ILII…FFVL) and 172 to 192 (VVNL…YIFF).

The protein belongs to the CpsC/CapA family.

Its subcellular location is the cell membrane. In terms of biological role, required for the biosynthesis of type 5 capsular polysaccharide (Cap5/CP5). Might act as the chain-length regulator. This chain is Capsular polysaccharide type 5 biosynthesis protein cap5A (cap5A), found in Staphylococcus aureus (strain Newman).